The chain runs to 71 residues: Small ribosomal subunit protein bS18c (71 aa).

This sequence belongs to the bacterial ribosomal protein bS18 family. As to quaternary structure, part of the 30S ribosomal subunit.

Its subcellular location is the plastid. It is found in the cyanelle. In Cyanophora paradoxa, this protein is Small ribosomal subunit protein bS18c (rps18).